Consider the following 177-residue polypeptide: Interleukin-1 receptor antagonist protein (177 aa).

Positions 1–25 are cleaved as a signal peptide; the sequence is MEVSRYLCSYLISFLLFLFHSETAC. An intrachain disulfide couples Cys91 to Cys141. An N-linked (GlcNAc...) asparagine glycan is attached at Asn109.

This sequence belongs to the IL-1 family.

The protein resides in the secreted. Anti-inflammatory antagonist of interleukin-1 family of proinflammatory cytokines such as interleukin-1beta/IL1B and interleukin-1alpha/IL1A. Protects from immune dysregulation and uncontrolled systemic inflammation triggered by IL1 for a range of innate stimulatory agents such as pathogens. The sequence is that of Interleukin-1 receptor antagonist protein (IL1RN) from Sus scrofa (Pig).